The sequence spans 1861 residues: Amylopullulanase (1861 aa).

Residues 1-35 form the signal peptide; the sequence is MNKKLFTNRFISFNMSLLLVLTAVFSSIPLHSVHA. Residues Asp248, Asn250, Asp288, Asp343, Asn401, Asp403, Asn406, Asp407, and Asp453 each coordinate Ca(2+). Substrate contacts are provided by His526 and Arg626. The Nucleophile role is filled by Asp628. The Proton donor role is filled by Glu657. Substrate-binding positions include 733 to 734, Asp793, and Arg797; that span reads HD. Fibronectin type-III domains lie at 929-1021 and 1158-1252; these read APQA…AYPI and KPTA…VVPI. One can recognise a CBM20 domain in the interval 1246 to 1354; the sequence is KPDVVPIKVI…INDTVYRWRD (109 aa). The disordered stretch occupies residues 1448–1486; sequence QENNSGSGTGNNNTSTSGSNSSSTGSGSTGSTSITSNIS. Over residues 1450-1486 the composition is skewed to low complexity; it reads NNSGSGTGNNNTSTSGSNSSSTGSGSTGSTSITSNIS. SLH domains follow at residues 1677-1740, 1741-1799, and 1802-1861; these read EYDK…YSGE, FSDV…KEEN, and ATTF…SGNI.

The protein belongs to the glycosyl hydrolase 13 family. Ca(2+) serves as cofactor. In terms of processing, glycosylated.

The protein resides in the secreted. Its subcellular location is the cell wall. The enzyme catalyses Endohydrolysis of (1-&gt;4)-alpha-D-glucosidic linkages in polysaccharides containing three or more (1-&gt;4)-alpha-linked D-glucose units.. It carries out the reaction Hydrolysis of (1-&gt;6)-alpha-D-glucosidic linkages in pullulan, amylopectin and glycogen, and in the alpha- and beta-limit dextrins of amylopectin and glycogen.. The polypeptide is Amylopullulanase (amyB) (Thermoanaerobacterium thermosulfurigenes (Clostridium thermosulfurogenes)).